The chain runs to 91 residues: Small ribosomal subunit protein uS19 (91 aa).

This sequence belongs to the universal ribosomal protein uS19 family.

Functionally, protein S19 forms a complex with S13 that binds strongly to the 16S ribosomal RNA. The protein is Small ribosomal subunit protein uS19 of Fusobacterium nucleatum subsp. nucleatum (strain ATCC 25586 / DSM 15643 / BCRC 10681 / CIP 101130 / JCM 8532 / KCTC 2640 / LMG 13131 / VPI 4355).